A 165-amino-acid chain; its full sequence is uncharacterized protein (165 aa).

Positions 51 to 102 (KQAAVEPGARGGERPTGSQAGVTDTPDSAPFQRRSRAPRAREQAAQAGLNQK) are disordered. The segment covering 66–76 (TGSQAGVTDTP) has biased composition (polar residues).

This is an uncharacterized protein from Mus musculus (Mouse).